A 271-amino-acid polypeptide reads, in one-letter code: Shikimate dehydrogenase (NADP(+)) (271 aa).

Shikimate-binding positions include 14–16 (SKS) and Thr61. Residue Lys65 is the Proton acceptor of the active site. The shikimate site is built by Asn86 and Asp102. NADP(+) is bound by residues 126–130 (GAGGA), 149–154 (NRTFSR), and Met213. Tyr215 provides a ligand contact to shikimate. Residue Gly238 coordinates NADP(+).

Belongs to the shikimate dehydrogenase family. As to quaternary structure, homodimer.

It carries out the reaction shikimate + NADP(+) = 3-dehydroshikimate + NADPH + H(+). It functions in the pathway metabolic intermediate biosynthesis; chorismate biosynthesis; chorismate from D-erythrose 4-phosphate and phosphoenolpyruvate: step 4/7. Functionally, involved in the biosynthesis of the chorismate, which leads to the biosynthesis of aromatic amino acids. Catalyzes the reversible NADPH linked reduction of 3-dehydroshikimate (DHSA) to yield shikimate (SA). This Histophilus somni (strain 2336) (Haemophilus somnus) protein is Shikimate dehydrogenase (NADP(+)).